We begin with the raw amino-acid sequence, 156 residues long: RNA polymerase sigma factor SigS (156 aa).

The Polymerase core binding motif lies at 29–44; sequence EYYQLLLIKMWQLSQI. The H-T-H motif DNA-binding region spans 126-145; it reads QYEIADIMSLSTSTIKLIKA.

This sequence belongs to the sigma-70 factor family.

Sigma factors are initiation factors that promote the attachment of RNA polymerase to specific initiation sites and are then released. Sigma-S contributes to the protection against external stress, thus playing a role in cellular fitness and survival. The polypeptide is RNA polymerase sigma factor SigS (sigS) (Staphylococcus aureus (strain MRSA252)).